Reading from the N-terminus, the 452-residue chain is Pup--protein ligase (452 aa).

Glu9 lines the Mg(2+) pocket. Arg53 provides a ligand contact to ATP. Tyr55 is a binding site for Mg(2+). Asp57 serves as the catalytic Proton acceptor. Glu63 provides a ligand contact to Mg(2+). Residues Thr66 and Trp419 each coordinate ATP.

This sequence belongs to the Pup ligase/Pup deamidase family. Pup-conjugating enzyme subfamily.

It carries out the reaction ATP + [prokaryotic ubiquitin-like protein]-L-glutamate + [protein]-L-lysine = ADP + phosphate + N(6)-([prokaryotic ubiquitin-like protein]-gamma-L-glutamyl)-[protein]-L-lysine.. The protein operates within protein degradation; proteasomal Pup-dependent pathway. It functions in the pathway protein modification; protein pupylation. Its function is as follows. Catalyzes the covalent attachment of the prokaryotic ubiquitin-like protein modifier Pup to the proteasomal substrate proteins, thereby targeting them for proteasomal degradation. This tagging system is termed pupylation. The ligation reaction involves the side-chain carboxylate of the C-terminal glutamate of Pup and the side-chain amino group of a substrate lysine. This Salinispora tropica (strain ATCC BAA-916 / DSM 44818 / JCM 13857 / NBRC 105044 / CNB-440) protein is Pup--protein ligase.